Reading from the N-terminus, the 280-residue chain is Putative S-adenosyl-L-methionine-dependent methyltransferase FRAAL3836 (280 aa).

Residues Asp121 and 150–151 (DL) contribute to the S-adenosyl-L-methionine site.

The protein belongs to the UPF0677 family.

Functionally, exhibits S-adenosyl-L-methionine-dependent methyltransferase activity. The sequence is that of Putative S-adenosyl-L-methionine-dependent methyltransferase FRAAL3836 from Frankia alni (strain DSM 45986 / CECT 9034 / ACN14a).